Reading from the N-terminus, the 1003-residue chain is Phosphoenolpyruvate carboxylase (1003 aa).

Residues 1–24 form a disordered region; the sequence is MIMTVSDPGGSSMSSSSAITPESE. Catalysis depends on residues His-190 and Lys-646.

The protein belongs to the PEPCase type 1 family. It depends on Mg(2+) as a cofactor.

It carries out the reaction oxaloacetate + phosphate = phosphoenolpyruvate + hydrogencarbonate. In terms of biological role, forms oxaloacetate, a four-carbon dicarboxylic acid source for the tricarboxylic acid cycle. The polypeptide is Phosphoenolpyruvate carboxylase (Synechococcus sp. (strain WH7803)).